Here is a 236-residue protein sequence, read N- to C-terminus: CO-responsive transcriptional regulator RcoM (236 aa).

The PAS domain occupies 1 to 64; it reads MDDFAYNLRR…PLRPKVAVLL (64 aa). H52 is a binding site for heme. In terms of domain architecture, HTH LytTR-type spans 131–236; it reads VPLGLGETTE…VTRLRGLLAI (106 aa).

Heme is required as a cofactor.

Its function is as follows. Activates the expression of the CowN protein in response to carbon monoxide (CO). Is required to sustain N(2)-dependent growth in the presence of low levels of carbon monoxide (CO). In Rhodospirillum rubrum (strain ATCC 11170 / ATH 1.1.1 / DSM 467 / LMG 4362 / NCIMB 8255 / S1), this protein is CO-responsive transcriptional regulator RcoM (rcoM).